Reading from the N-terminus, the 887-residue chain is Alanine--tRNA ligase (887 aa).

The span at 425–441 (MQEQKSRARSDRREKQQ) shows a compositional bias: basic and acidic residues. The segment at 425–448 (MQEQKSRARSDRREKQQTGDGAGS) is disordered. 4 residues coordinate Zn(2+): His-569, His-573, Cys-672, and His-676.

It belongs to the class-II aminoacyl-tRNA synthetase family. Zn(2+) serves as cofactor.

Its subcellular location is the cytoplasm. The catalysed reaction is tRNA(Ala) + L-alanine + ATP = L-alanyl-tRNA(Ala) + AMP + diphosphate. In terms of biological role, catalyzes the attachment of alanine to tRNA(Ala) in a two-step reaction: alanine is first activated by ATP to form Ala-AMP and then transferred to the acceptor end of tRNA(Ala). Also edits incorrectly charged Ser-tRNA(Ala) and Gly-tRNA(Ala) via its editing domain. The protein is Alanine--tRNA ligase of Chlorobium luteolum (strain DSM 273 / BCRC 81028 / 2530) (Pelodictyon luteolum).